The chain runs to 292 residues: 4-hydroxy-tetrahydrodipicolinate synthase (292 aa).

Residue Thr-44 coordinates pyruvate. The active-site Proton donor/acceptor is the Tyr-132. Residue Lys-161 is the Schiff-base intermediate with substrate of the active site. Ile-203 contributes to the pyruvate binding site.

The protein belongs to the DapA family. Homotetramer.

The protein resides in the cytoplasm. It catalyses the reaction L-aspartate 4-semialdehyde + pyruvate = (2S,4S)-4-hydroxy-2,3,4,5-tetrahydrodipicolinate + H2O + H(+). It participates in amino-acid biosynthesis; L-lysine biosynthesis via DAP pathway; (S)-tetrahydrodipicolinate from L-aspartate: step 3/4. Is feedback inhibited by lysine. Is competitively inhibited by 2-oxobutyrate with respect to pyruvate. Its function is as follows. Catalyzes the condensation of (S)-aspartate-beta-semialdehyde [(S)-ASA] and pyruvate to 4-hydroxy-tetrahydrodipicolinate (HTPA). The protein is 4-hydroxy-tetrahydrodipicolinate synthase of Rhizobium meliloti (Ensifer meliloti).